The chain runs to 72 residues: Translation initiation factor IF-1 2 (72 aa).

One can recognise an S1-like domain in the interval 1–72 (MAKEDTIQMQ…SRARIVFRAK (72 aa)).

Belongs to the IF-1 family. In terms of assembly, component of the 30S ribosomal translation pre-initiation complex which assembles on the 30S ribosome in the order IF-2 and IF-3, IF-1 and N-formylmethionyl-tRNA(fMet); mRNA recruitment can occur at any time during PIC assembly.

The protein localises to the cytoplasm. Its function is as follows. One of the essential components for the initiation of protein synthesis. Stabilizes the binding of IF-2 and IF-3 on the 30S subunit to which N-formylmethionyl-tRNA(fMet) subsequently binds. Helps modulate mRNA selection, yielding the 30S pre-initiation complex (PIC). Upon addition of the 50S ribosomal subunit IF-1, IF-2 and IF-3 are released leaving the mature 70S translation initiation complex. The sequence is that of Translation initiation factor IF-1 2 from Chromobacterium violaceum (strain ATCC 12472 / DSM 30191 / JCM 1249 / CCUG 213 / NBRC 12614 / NCIMB 9131 / NCTC 9757 / MK).